The chain runs to 324 residues: Phospho-N-acetylmuramoyl-pentapeptide-transferase (324 aa).

Helical transmembrane passes span 5–25, 51–71, 77–97, 117–137, 147–167, 176–196, 203–223, 227–248, and 302–322; these read VILFTIIMGFLISVLLSPIFI, TPTMGGIMIIFSITITTIVMI, ISPEMFLLLFVTLGYGLLGFL, LIGQIVIAVIFYAVFHYYQFA, VSFDLGWAYFILVVFMLVGGS, LDGLLSGTAAIAFGAFAILAW, VAIFSVAVAGAVLGFLVFNAH, VFMGDTGSLALGGAIVAIAILT, and VVVTFWTAGLLLAVLGIYIEV.

It belongs to the glycosyltransferase 4 family. MraY subfamily. Mg(2+) serves as cofactor.

The protein localises to the cell membrane. The enzyme catalyses UDP-N-acetyl-alpha-D-muramoyl-L-alanyl-gamma-D-glutamyl-meso-2,6-diaminopimeloyl-D-alanyl-D-alanine + di-trans,octa-cis-undecaprenyl phosphate = di-trans,octa-cis-undecaprenyl diphospho-N-acetyl-alpha-D-muramoyl-L-alanyl-D-glutamyl-meso-2,6-diaminopimeloyl-D-alanyl-D-alanine + UMP. Its pathway is cell wall biogenesis; peptidoglycan biosynthesis. Functionally, catalyzes the initial step of the lipid cycle reactions in the biosynthesis of the cell wall peptidoglycan: transfers peptidoglycan precursor phospho-MurNAc-pentapeptide from UDP-MurNAc-pentapeptide onto the lipid carrier undecaprenyl phosphate, yielding undecaprenyl-pyrophosphoryl-MurNAc-pentapeptide, known as lipid I. This is Phospho-N-acetylmuramoyl-pentapeptide-transferase from Bacillus pumilus (strain SAFR-032).